Here is a 102-residue protein sequence, read N- to C-terminus: UPF0328 protein ECU10_1820 (102 aa).

It belongs to the UPF0328 family.

This Encephalitozoon cuniculi (strain GB-M1) (Microsporidian parasite) protein is UPF0328 protein ECU10_1820.